We begin with the raw amino-acid sequence, 239 residues long: Pimeloyl-[acyl-carrier protein] methyl ester esterase (239 aa).

Residues tryptophan 20, 77-78 (SM), and 138-142 (FISLQ) contribute to the substrate site. Residue serine 77 is the Nucleophile of the active site. Active-site residues include aspartate 192 and histidine 220. Residue histidine 220 participates in substrate binding.

It belongs to the AB hydrolase superfamily. Carboxylesterase BioH family. Monomer.

The protein localises to the cytoplasm. The catalysed reaction is 6-carboxyhexanoyl-[ACP] methyl ester + H2O = 6-carboxyhexanoyl-[ACP] + methanol + H(+). It functions in the pathway cofactor biosynthesis; biotin biosynthesis. Its function is as follows. The physiological role of BioH is to remove the methyl group introduced by BioC when the pimeloyl moiety is complete. It allows to synthesize pimeloyl-ACP via the fatty acid synthetic pathway through the hydrolysis of the ester bonds of pimeloyl-ACP esters. The chain is Pimeloyl-[acyl-carrier protein] methyl ester esterase from Legionella pneumophila (strain Corby).